The sequence spans 454 residues: Bifunctional protein GlmU (454 aa).

The segment at 1–226 (MALNVVILAA…AIEVEGANNR (226 aa)) is pyrophosphorylase. UDP-N-acetyl-alpha-D-glucosamine-binding positions include 8 to 11 (LAAG), Lys-22, Gln-73, 78 to 79 (GT), 100 to 102 (YGD), Gly-137, Glu-151, Asn-166, and Asn-224. Asp-102 provides a ligand contact to Mg(2+). Asn-224 contacts Mg(2+). The linker stretch occupies residues 227-247 (VQLAQLERAYQAREAEKLMIA). The N-acetyltransferase stretch occupies residues 248 to 454 (GANLRDPSRI…GWQRPVKIKK (207 aa)). Arg-330 and Lys-348 together coordinate UDP-N-acetyl-alpha-D-glucosamine. His-360 functions as the Proton acceptor in the catalytic mechanism. 2 residues coordinate UDP-N-acetyl-alpha-D-glucosamine: Tyr-363 and Asn-374. Residues Ala-377, 383-384 (NY), Ser-402, Ala-420, and Arg-437 each bind acetyl-CoA.

This sequence in the N-terminal section; belongs to the N-acetylglucosamine-1-phosphate uridyltransferase family. The protein in the C-terminal section; belongs to the transferase hexapeptide repeat family. In terms of assembly, homotrimer. Mg(2+) serves as cofactor.

The protein resides in the cytoplasm. The enzyme catalyses alpha-D-glucosamine 1-phosphate + acetyl-CoA = N-acetyl-alpha-D-glucosamine 1-phosphate + CoA + H(+). It carries out the reaction N-acetyl-alpha-D-glucosamine 1-phosphate + UTP + H(+) = UDP-N-acetyl-alpha-D-glucosamine + diphosphate. It functions in the pathway nucleotide-sugar biosynthesis; UDP-N-acetyl-alpha-D-glucosamine biosynthesis; N-acetyl-alpha-D-glucosamine 1-phosphate from alpha-D-glucosamine 6-phosphate (route II): step 2/2. Its pathway is nucleotide-sugar biosynthesis; UDP-N-acetyl-alpha-D-glucosamine biosynthesis; UDP-N-acetyl-alpha-D-glucosamine from N-acetyl-alpha-D-glucosamine 1-phosphate: step 1/1. It participates in bacterial outer membrane biogenesis; LPS lipid A biosynthesis. Functionally, catalyzes the last two sequential reactions in the de novo biosynthetic pathway for UDP-N-acetylglucosamine (UDP-GlcNAc). The C-terminal domain catalyzes the transfer of acetyl group from acetyl coenzyme A to glucosamine-1-phosphate (GlcN-1-P) to produce N-acetylglucosamine-1-phosphate (GlcNAc-1-P), which is converted into UDP-GlcNAc by the transfer of uridine 5-monophosphate (from uridine 5-triphosphate), a reaction catalyzed by the N-terminal domain. This chain is Bifunctional protein GlmU, found in Shewanella sp. (strain ANA-3).